Consider the following 543-residue polypeptide: Bifunctional purine biosynthesis protein PurH (543 aa).

Residues 5-151 (NHARPIRRAL…KNHKDVTIVV (147 aa)) enclose the MGS-like domain.

It belongs to the PurH family.

It carries out the reaction (6R)-10-formyltetrahydrofolate + 5-amino-1-(5-phospho-beta-D-ribosyl)imidazole-4-carboxamide = 5-formamido-1-(5-phospho-D-ribosyl)imidazole-4-carboxamide + (6S)-5,6,7,8-tetrahydrofolate. The catalysed reaction is IMP + H2O = 5-formamido-1-(5-phospho-D-ribosyl)imidazole-4-carboxamide. The protein operates within purine metabolism; IMP biosynthesis via de novo pathway; 5-formamido-1-(5-phospho-D-ribosyl)imidazole-4-carboxamide from 5-amino-1-(5-phospho-D-ribosyl)imidazole-4-carboxamide (10-formyl THF route): step 1/1. It participates in purine metabolism; IMP biosynthesis via de novo pathway; IMP from 5-formamido-1-(5-phospho-D-ribosyl)imidazole-4-carboxamide: step 1/1. This chain is Bifunctional purine biosynthesis protein PurH, found in Shewanella oneidensis (strain ATCC 700550 / JCM 31522 / CIP 106686 / LMG 19005 / NCIMB 14063 / MR-1).